The following is a 344-amino-acid chain: Phosphoribosylformylglycinamidine cyclo-ligase (344 aa).

This sequence belongs to the AIR synthase family.

It is found in the cytoplasm. It carries out the reaction 2-formamido-N(1)-(5-O-phospho-beta-D-ribosyl)acetamidine + ATP = 5-amino-1-(5-phospho-beta-D-ribosyl)imidazole + ADP + phosphate + H(+). It participates in purine metabolism; IMP biosynthesis via de novo pathway; 5-amino-1-(5-phospho-D-ribosyl)imidazole from N(2)-formyl-N(1)-(5-phospho-D-ribosyl)glycinamide: step 2/2. The protein is Phosphoribosylformylglycinamidine cyclo-ligase of Neisseria meningitidis serogroup C (strain 053442).